A 212-amino-acid polypeptide reads, in one-letter code: Ribonuclease HII (212 aa).

Residues 20-209 (TCVVGVDEVG…VHNILYQEAS (190 aa)) form the RNase H type-2 domain. Residues Asp26, Glu27, and Asp117 each coordinate a divalent metal cation.

The protein belongs to the RNase HII family. It depends on Mn(2+) as a cofactor. Requires Mg(2+) as cofactor.

The protein resides in the cytoplasm. It catalyses the reaction Endonucleolytic cleavage to 5'-phosphomonoester.. Endonuclease that specifically degrades the RNA of RNA-DNA hybrids. The protein is Ribonuclease HII of Cereibacter sphaeroides (strain ATCC 17023 / DSM 158 / JCM 6121 / CCUG 31486 / LMG 2827 / NBRC 12203 / NCIMB 8253 / ATH 2.4.1.) (Rhodobacter sphaeroides).